A 293-amino-acid polypeptide reads, in one-letter code: Undecaprenyl-diphosphatase (293 aa).

A run of 6 helical transmembrane segments spans residues 74 to 94 (VLVF…AGVF), 107 to 127 (WMII…KDLI), 134 to 154 (MWIT…AEKM), 209 to 229 (FLLA…DAFA), 243 to 263 (VGTL…MKFV), and 271 to 291 (FAAY…LGML).

This sequence belongs to the UppP family.

The protein resides in the cell membrane. It carries out the reaction di-trans,octa-cis-undecaprenyl diphosphate + H2O = di-trans,octa-cis-undecaprenyl phosphate + phosphate + H(+). Functionally, catalyzes the dephosphorylation of undecaprenyl diphosphate (UPP). Confers resistance to bacitracin. The polypeptide is Undecaprenyl-diphosphatase (Corynebacterium glutamicum (strain ATCC 13032 / DSM 20300 / JCM 1318 / BCRC 11384 / CCUG 27702 / LMG 3730 / NBRC 12168 / NCIMB 10025 / NRRL B-2784 / 534)).